The chain runs to 1405 residues: DNA-directed RNA polymerase subunit beta' (1405 aa).

The Zn(2+) site is built by Cys-70, Cys-72, Cys-85, and Cys-88. Residues Asp-460, Asp-462, and Asp-464 each coordinate Mg(2+). Residues Cys-815, Cys-890, Cys-897, and Cys-900 each contribute to the Zn(2+) site.

The protein belongs to the RNA polymerase beta' chain family. As to quaternary structure, the RNAP catalytic core consists of 2 alpha, 1 beta, 1 beta' and 1 omega subunit. When a sigma factor is associated with the core the holoenzyme is formed, which can initiate transcription. Mg(2+) serves as cofactor. Requires Zn(2+) as cofactor.

The enzyme catalyses RNA(n) + a ribonucleoside 5'-triphosphate = RNA(n+1) + diphosphate. Its function is as follows. DNA-dependent RNA polymerase catalyzes the transcription of DNA into RNA using the four ribonucleoside triphosphates as substrates. The protein is DNA-directed RNA polymerase subunit beta' of Xanthomonas campestris pv. campestris (strain 8004).